Consider the following 988-residue polypeptide: Transcription regulator srbA precursor (988 aa).

The Cytoplasmic portion of the chain corresponds to 1–427; that stretch reads MSTPGIGGDF…SSWHARAISH (427 aa). 2 disordered regions span residues 53–85 and 108–169; these read AFPETANASPSSPFDLAFISPSASSGREASDAM and GDLN…KKRA. Residues 125-136 are compositionally biased toward low complexity; the sequence is SLSVHSNSPLSS. A basic motif region spans residues 165–178; sequence SKKRAHNVIEKRYR. In terms of domain architecture, bHLH spans 165 to 236; it reads SKKRAHNVIE…SKATEYIRHL (72 aa). A helix-loop-helix motif region spans residues 179-236; that stretch reads ANLNEKIAELRDSVPSLRASYKQANGNSGDDDDDGVTSASKLNKASILSKATEYIRHL. The stretch at 226-260 forms a coiled coil; that stretch reads LSKATEYIRHLEIRNKRLEEENTALKIRLRQLDKA. Polar residues predominate over residues 267–291; sequence SAASVSSPSDCTVSTESGASSSPSV. A disordered region spans residues 267–313; the sequence is SAASVSSPSDCTVSTESGASSSPSVFSHAEDVPSDHSPTSSHPPEGL. Residues 301-310 are compositionally biased toward low complexity; sequence DHSPTSSHPP. A helical membrane pass occupies residues 428-447; it reads FLMLAILVVGSAFIVFVYLF. Over 448 to 988 the chain is Lumenal; sequence NSDPRRQYSA…SDNLLLSDES (541 aa). Low complexity predominate over residues 866–881; it reads PPSPMSKASDMLSSSS. The disordered stretch occupies residues 866–900; the sequence is PPSPMSKASDMLSSSSDDGEDGASQRNNNIIPHPM.

Post-translationally, in low oxygen or sterol conditions, undergoes proteolytic cleavage by rhomboid-type protease rbdB and is released as soluble transcription factor from the membrane.

The protein localises to the endoplasmic reticulum membrane. Its subcellular location is the nucleus. Precursor of the transcription factor srbA, which is embedded in the endoplasmic reticulum membrane. Low oxygen or sterol conditions promote processing of this form, releasing the transcription factor form that translocates into the nucleus and activates transcription of genes required for adaptation to anaerobic growth. Functionally, transcription factor that regulates sterol biosynthesis and hyphal morphology. Plays a critical role in ergosterol biosynthesis, resistance to the azole class of antifungal drugs, and in maintenance of cell polarity. Directly binds erg11A/cyp51A upstream DNA sequence at tandem repeats, called TR34 and TR46, that produce duplicated binding sites. Also mediates regulation of iron acquisition in response to hypoxia and low iron conditions via activation of extra- and intracellular siderophore production. Positively regulates the expression of the other hypoxia adaptation key transcription factor srbB. Required for the azole-sensing and response to azole stress. Binds the high-affinity sites 5'-A-T-C-G/A-T/G-A/G-C/T-G/C-A-T-3' of target promoters. Required for virulence in murine models of invasive pulmonary aspergillosis (IPA). This Aspergillus fumigatus (strain ATCC MYA-4609 / CBS 101355 / FGSC A1100 / Af293) (Neosartorya fumigata) protein is Transcription regulator srbA precursor.